We begin with the raw amino-acid sequence, 58 residues long: Teratocyte protein CftICK-III (58 aa).

A signal peptide spans M1–A24. Cystine bridges form between C27–C42, C34–C47, and C41–C55.

Abundantly expressed by teratocytes, which are extra-embryonic cells released by parasitoid wasps into their hosts during larval eclosion.

It localises to the secreted. In terms of biological role, this endoparasitoid wasp peptide has immununosuppressive and insecticidal activities. Suppress cellular immunity which is detectable as a reduction of hemocyte encapsulation in the host. In vivo, ingestion of this peptide (probably at excessive doses) increases larval mortality and reduces leaf consumption in both lepidopteran species D.saccharalis and S.frugiperda, which are permissive and non-permissive hosts for C.flavipes, respectively. In Cotesia flavipes (Parasitic wasp), this protein is Teratocyte protein CftICK-III.